A 725-amino-acid chain; its full sequence is Dipeptidyl-peptidase 5 (725 aa).

An N-terminal signal peptide occupies residues 1 to 18 (MGALRWLSIAATASTALA). N-linked (GlcNAc...) asparagine glycosylation is found at Asn-75, Asn-96, Asn-153, Asn-258, Asn-383, and Asn-453. Ser-563 (charge relay system) is an active-site residue. Asn-610 carries an N-linked (GlcNAc...) asparagine glycan. Active-site charge relay system residues include Asp-646 and His-678.

This sequence belongs to the peptidase S9C family.

Its subcellular location is the secreted. In Aspergillus oryzae (strain ATCC 42149 / RIB 40) (Yellow koji mold), this protein is Dipeptidyl-peptidase 5.